A 114-amino-acid chain; its full sequence is Large ribosomal subunit protein bL19 (114 aa).

This sequence belongs to the bacterial ribosomal protein bL19 family.

This protein is located at the 30S-50S ribosomal subunit interface and may play a role in the structure and function of the aminoacyl-tRNA binding site. The chain is Large ribosomal subunit protein bL19 from Lactococcus lactis subsp. lactis (strain IL1403) (Streptococcus lactis).